The following is a 141-amino-acid chain: Galactose-6-phosphate isomerase subunit LacA (141 aa).

Belongs to the LacAB/RpiB family. In terms of assembly, heteromultimeric protein consisting of LacA and LacB.

The catalysed reaction is aldehydo-D-galactose 6-phosphate = keto-D-tagatose 6-phosphate. Its pathway is carbohydrate metabolism; D-galactose 6-phosphate degradation; D-tagatose 6-phosphate from D-galactose 6-phosphate: step 1/1. This is Galactose-6-phosphate isomerase subunit LacA from Streptococcus pneumoniae (strain 70585).